A 159-amino-acid polypeptide reads, in one-letter code: Cyclic pyranopterin monophosphate synthase (159 aa).

Substrate is bound by residues 75-77 (LCH) and 113-114 (ME). Aspartate 128 is a catalytic residue.

It belongs to the MoaC family. As to quaternary structure, homohexamer; trimer of dimers.

The enzyme catalyses (8S)-3',8-cyclo-7,8-dihydroguanosine 5'-triphosphate = cyclic pyranopterin phosphate + diphosphate. It functions in the pathway cofactor biosynthesis; molybdopterin biosynthesis. Catalyzes the conversion of (8S)-3',8-cyclo-7,8-dihydroguanosine 5'-triphosphate to cyclic pyranopterin monophosphate (cPMP). The polypeptide is Cyclic pyranopterin monophosphate synthase (Vibrio atlanticus (strain LGP32) (Vibrio splendidus (strain Mel32))).